Here is a 134-residue protein sequence, read N- to C-terminus: MIMPQSRLDVADNSGAREIMCIRVLNSGIGGKGLTTGGGGNKRYAHVGDIIVASVKDAAPRGAVKAGDVVKAVVVRTSHAIKRADGSTIRFDRNAAVIINNQGEPRGTRVFGPVARELRDRRFMKIVSLAPEVL.

Belongs to the universal ribosomal protein uL14 family. In the 70S ribosome, L14 and L19 interact and together make contacts with the 16S rRNA in bridges B5 and B8. Part of the 50S ribosomal subunit. Forms a cluster with proteins L3 and L19.

Functionally, forms part of two intersubunit bridges in the 70S ribosome. Binds to 23S rRNA. The sequence is that of Large ribosomal subunit protein uL14 from Deinococcus radiodurans (strain ATCC 13939 / DSM 20539 / JCM 16871 / CCUG 27074 / LMG 4051 / NBRC 15346 / NCIMB 9279 / VKM B-1422 / R1).